The primary structure comprises 496 residues: MIRFSWVRLCSSAMAAAAASPDVQAITRAQAMQLDDLSPRKIASILDSYIVGQAEGKRAVAISLRNRWRRRQIEDEGLRRDILPKNILLVGPTGVGKTEISRRMAKLTEAPFVKVEATKYTEVGFKGKDVESIIEDLYSNAKTKAKRRLEIEREKEAHELALEIVFNGWHSCRSASGSFGSSTRNSGSGDSSAEEDKNSSSRDNVTFEEFKEKYKTQFKDDMVVIDVTQQPKGNTKPNASINSVEMLSVGILLGLGSESRGVKTRVTKRVEEALPLATQEALSRLVDETQISALARTLAEQDGVVFIDEIDKVVTEPASANADVSSTGVQQDLLPLIEGSNVTLKDGSQISTDNILFICSGAFHTVKTSDMIAELQGRLPVRVEMHALKEEDIRRILCEPKFNLLLQQKALMKTENIDLEFTPDAVDELARVTTKVNANAQNIGARRLHTVVERVMDEYSFNCQDYEGKKVVIDAEVVRKATGSLMNNIDLAKYIL.

A mitochondrion-targeting transit peptide spans 1-10 (MIRFSWVRLC). ATP contacts are provided by residues valine 51 and 94–99 (GVGKTE). The segment covering 177-191 (GSFGSSTRNSGSGDS) has biased composition (low complexity). Positions 177 to 204 (GSFGSSTRNSGSGDSSAEEDKNSSSRDN) are disordered. Aspartate 308, glutamate 374, and arginine 446 together coordinate ATP.

This sequence belongs to the ClpX chaperone family. HslU subfamily. As to quaternary structure, a double ring-shaped homohexamer of HslV is capped on each side by a ring-shaped HslU homohexamer. The assembly of the HslU/HslV complex (HslVU) is dependent on binding of ATP.

The protein resides in the mitochondrion matrix. It localises to the kinetoplast. In terms of biological role, ATPase subunit of a proteasome-like degradation complex; this subunit has chaperone activity. The binding of ATP and its subsequent hydrolysis by HslU are essential for unfolding of protein substrates subsequently hydrolyzed by HslV. HslU recognizes the N-terminal part of its protein substrates and unfolds these before they are guided to HslV for hydrolysis. The HslVU protease complex functions in mitochondrial DNA replication by regulating DNA helicase PIF2 protein levels. The sequence is that of ATP-dependent protease ATPase subunit HslU2 (HslU2) from Trypanosoma brucei brucei (strain 927/4 GUTat10.1).